A 610-amino-acid chain; its full sequence is NTPase KAP family P-loop domain-containing protein 1 (610 aa).

Positions 1-414 constitute a KAP NTPase domain; the sequence is MQQEAAQRES…NTVPITVRLL (414 aa). The next 3 membrane-spanning stretches (helical) occupy residues 22 to 42, 118 to 138, and 157 to 177; these read AVSGWGVPQLLWYLVFLQPII, VCLGLLALLAALGLGVGLLYL, and VFGGAATTLSGSGLLMAVYSV. A disordered region spans residues 540 to 587; that stretch reads ALKPPSPPKSPTRDTPHAAHRANSASRAPPSGRASGQAGEGHHTGDLA. Over residues 560-575 the composition is skewed to low complexity; sequence RANSASRAPPSGRASG.

It localises to the membrane. In Homo sapiens (Human), this protein is NTPase KAP family P-loop domain-containing protein 1 (NKPD1).